The following is a 216-amino-acid chain: Adenylate kinase (216 aa).

10–15 (GAGKGT) lines the ATP pocket. The segment at 30–59 (STGDIFRANIKEKTPLGIEAKRYIDNGQLV) is NMP. AMP-binding positions include T31, R36, 57–59 (QLV), 85–88 (GFPR), and Q92. The segment at 126–163 (GRRVCTSCGASYHIRFNPPKIEGKCDICDNELIQRKDD) is LID. Position 127 (R127) interacts with ATP. Zn(2+)-binding residues include C130 and C133. An ATP-binding site is contributed by 136–137 (SY). Zn(2+)-binding residues include C150 and C153. Positions 160 and 171 each coordinate AMP. An ATP-binding site is contributed by E199.

This sequence belongs to the adenylate kinase family. In terms of assembly, monomer.

It localises to the cytoplasm. It catalyses the reaction AMP + ATP = 2 ADP. It participates in purine metabolism; AMP biosynthesis via salvage pathway; AMP from ADP: step 1/1. Functionally, catalyzes the reversible transfer of the terminal phosphate group between ATP and AMP. Plays an important role in cellular energy homeostasis and in adenine nucleotide metabolism. In Clostridium botulinum (strain 657 / Type Ba4), this protein is Adenylate kinase.